The sequence spans 633 residues: ATP-dependent clpX-like chaperone, mitochondrial (633 aa).

The transit peptide at 1–56 (MSSCGACTCGAAAARLLTTSLTSAQRGISCGRIHVPVLGRLGTLDTQILRRAPLRT) directs the protein to the mitochondrion. The tract at residues 65–101 (ASKDGTNKDGSGDGNKKSVTEGSSKKSGSGNSGKGGN) is disordered. A compositionally biased stretch (basic and acidic residues) spans 69–83 (GTNKDGSGDGNKKSV). Positions 84–93 (TEGSSKKSGS) are enriched in low complexity. The ClpX-type ZB domain maps to 93–146 (SGNSGKGGNQLRCPKCGDLCTHVETFVSSTRFVKCEKCHHFFVVLSEADSKKSI). Residues C105, C108, C127, and C130 each coordinate Zn(2+). 294–301 (PTGSGKTL) serves as a coordination point for ATP. N6-acetyllysine is present on K437. A compositionally biased stretch (basic and acidic residues) spans 598–610 (KEPGYIRAPSKES). The segment at 598–633 (KEPGYIRAPSKESSEEDYDSGVEEDGWPRQADAANS) is disordered. Positions 611–622 (SEEDYDSGVEED) are enriched in acidic residues. S617 carries the phosphoserine modification.

This sequence belongs to the ClpX chaperone family. In terms of assembly, homohexamer that forms a ring structure; this hexamerization requires ATP binding. Component of the ClpXP complex formed by the assembly of two CLPP heptameric rings with two CLPX hexameric rings, giving rise to a symmetrical structure with two central CLPP rings flanked by a CLPX ring at either end of the complex. Interacts with TFAM.

It localises to the mitochondrion. It is found in the mitochondrion matrix. Its subcellular location is the mitochondrion nucleoid. It catalyses the reaction ATP + H2O = ADP + phosphate + H(+). ATP-dependent chaperone that functions as an unfoldase. As part of the ClpXP protease complex, it recognizes specific protein substrates, unfolds them using energy derived from ATP hydrolysis, and then translocates them to the proteolytic subunit (CLPP) of the ClpXP complex for degradation. Thanks to its chaperone activity, it also functions in the incorporation of the pyridoxal phosphate cofactor into 5-aminolevulinate synthase, thereby activating 5-aminolevulinate (ALA) synthesis, the first step in heme biosynthesis. This chaperone is also involved in the control of mtDNA nucleoid distribution, by regulating mitochondrial transcription factor A (TFAM) activity. In Rattus norvegicus (Rat), this protein is ATP-dependent clpX-like chaperone, mitochondrial.